A 258-amino-acid polypeptide reads, in one-letter code: Snake venom serine protease 5 (258 aa).

The signal sequence occupies residues 1 to 18 (MVLIRVLANLLILQLSYA). The propeptide occupies 19–24 (QKSSEL). In terms of domain architecture, Peptidase S1 spans 25–249 (VVGGRPCNIN…HLDWIQNIIA (225 aa)). Cystine bridges form between C31/C163, C50/C66, C98/C256, C142/C210, C174/C189, and C200/C225. Residue N44 is glycosylated (N-linked (GlcNAc...) asparagine). H65 acts as the Charge relay system in catalysis. N-linked (GlcNAc...) asparagine glycosylation occurs at N103. Residue D110 is the Charge relay system of the active site. 4 N-linked (GlcNAc...) asparagine glycosylation sites follow: N121, N122, N154, and N170. The active-site Charge relay system is S204. An N-linked (GlcNAc...) asparagine glycan is attached at N251.

It belongs to the peptidase S1 family. Snake venom subfamily. In terms of assembly, monomer. As to expression, expressed by the venom gland.

It localises to the secreted. Functionally, snake venom serine protease that may act in the hemostasis system of the prey. This chain is Snake venom serine protease 5, found in Trimeresurus stejnegeri (Chinese green tree viper).